A 511-amino-acid chain; its full sequence is Immunoglobulin-binding protein EibD (511 aa).

A signal peptide spans 1–26 (MSKKFTMTLLSSSLAGLLVMSGGVSA). The interval 27–417 (QNGTYSVLQD…SKAIAANTRT (391 aa)) is surface exposed passenger domain. Residues 27-460 (QNGTYSVLQD…GLFQPYSVGK (434 aa)) are Extracellular-facing. The head domain stretch occupies residues 161-287 (DAKASGEFSV…TGTESDKTYG (127 aa)). Residues 288 to 303 (TRVLGGLSDGTRNSDA) are neck. Residues 304–349 (ATVGQLNRKVGGVYDDVKARITVESEKQKKYTDQKTSEVNEKVEAR) form a right-handed coiled-coil (RHcc) region. A coiled-coil region spans residues 304–349 (ATVGQLNRKVGGVYDDVKARITVESEKQKKYTDQKTSEVNEKVEAR). The tract at residues 329–344 (EKQKKYTDQKTSEVNE) is required to bind IgA. The tract at residues 350-375 (TTVGVDSDGKLTRAEGATKTIAVNDG) is saddle domain. Positions 376–441 (LVALSGRTDR…INENHKEMKR (66 aa)) form a coiled coil. The tract at residues 376 to 441 (LVALSGRTDR…INENHKEMKR (66 aa)) is left-handed coiled-coil (LHcc). The tract at residues 384–418 (DRIDYAVGAIDGRVTRNTQSIEKNSKAIAANTRTL) is required to bind IgG. The tract at residues 418–460 (LQQHSARLDSQQRQINENHKEMKRAAAQSAALTGLFQPYSVGK) is outer membrane translocation of the passenger domain. 4 beta stranded membrane passes run 461–471 (FNATAAVGGYS), 474–485 (QALAVGVGYRFN), 488–497 (TAAKAGVAFS), and 501–511 (ASWNVGVNFEF). The translocator domain stretch occupies residues 461 to 511 (FNATAAVGGYSDQQALAVGVGYRFNEQTAAKAGVAFSDGDASWNVGVNFEF).

Belongs to the autotransporter-2 (AT-2) (TC 1.B.40) family. Eib subfamily. As to quaternary structure, homotrimer; can probably form mixed heterotrimers in vivo. Will form mixed heterotrimers with EibA or EibC; these are correctly located in the outer membrane and bind IgG Fc, although less well than homotrimers. In denaturing gels runs as a band of about 210 kDa. Binds the Fc portion of immunoglobulins; binds more than 1 Fc per subunit, can be modeled to bind 3 Fc per trimer.

The protein localises to the cell surface. It is found in the cell outer membrane. Binds (in a non-immune fashion) to the Fc portion of human IgA and IgG; binding occurs on the cell surface. Confers the ability to survive exposure to human serum exposure. Binds to the Fc portion of human IgG, IgA and to whole mouse antibodies also via Fc. Upon overexpression cells acquire an extra cell surface layer that forms a zipper-like contact between cells; cells autoagglutinate and form biofilm more readily, suggesting it may play a role in defense against a host. This Escherichia coli protein is Immunoglobulin-binding protein EibD.